A 116-amino-acid polypeptide reads, in one-letter code: Large ribosomal subunit protein bL20 (116 aa).

The protein belongs to the bacterial ribosomal protein bL20 family.

Functionally, binds directly to 23S ribosomal RNA and is necessary for the in vitro assembly process of the 50S ribosomal subunit. It is not involved in the protein synthesizing functions of that subunit. This chain is Large ribosomal subunit protein bL20, found in Helicobacter acinonychis (strain Sheeba).